Consider the following 339-residue polypeptide: Heat-inducible transcription repressor HrcA (339 aa).

It belongs to the HrcA family.

In terms of biological role, negative regulator of class I heat shock genes (grpE-dnaK-dnaJ and groELS operons). Prevents heat-shock induction of these operons. The sequence is that of Heat-inducible transcription repressor HrcA from Clostridium perfringens (strain 13 / Type A).